The chain runs to 271 residues: High mobility group protein homolog TDP-1 (271 aa).

Residues 8-63 form the DEK-C domain; the sequence is GPLPTDIEETVITIMREEGVRYITAKILRMRLESKYQMEFGPHKAAIDDIVARAMQ. Residues 75–118 are disordered; the sequence is LKEKDASKSSGGKGSKRARSAGAEAPSKTKKEMTEKPKKPADYP. Basic and acidic residues predominate over residues 101 to 116; that stretch reads SKTKKEMTEKPKKPAD. DNA-binding regions (HMG box) lie at residues 118 to 186 and 206 to 270; these read PKPA…DEYK and PKRA…AALP.

The protein localises to the nucleus. Unknown. May play a role in transcription and/or DNA replication. It is not known whether this protein is DNA sequence binding-specific or not. The polypeptide is High mobility group protein homolog TDP-1 (Trypanosoma brucei rhodesiense).